A 102-amino-acid polypeptide reads, in one-letter code: Small ribosomal subunit protein bS18c (102 aa).

This sequence belongs to the bacterial ribosomal protein bS18 family. As to quaternary structure, part of the 30S ribosomal subunit.

The protein localises to the plastid. It is found in the chloroplast. This is Small ribosomal subunit protein bS18c from Phaseolus vulgaris (Kidney bean).